We begin with the raw amino-acid sequence, 235 residues long: Uridylate kinase (235 aa).

Residue 9–12 (KLSG) coordinates ATP. Residues 17–22 (GNQGYG) are involved in allosteric activation by GTP. Glycine 51 contacts UMP. 2 residues coordinate ATP: glycine 52 and arginine 56. UMP contacts are provided by residues aspartate 71 and 132–139 (CGNPFFTT). Residues threonine 159, tyrosine 165, and aspartate 168 each contribute to the ATP site.

The protein belongs to the UMP kinase family. As to quaternary structure, homohexamer.

Its subcellular location is the cytoplasm. It carries out the reaction UMP + ATP = UDP + ADP. The protein operates within pyrimidine metabolism; CTP biosynthesis via de novo pathway; UDP from UMP (UMPK route): step 1/1. With respect to regulation, allosterically activated by GTP. Inhibited by UTP. In terms of biological role, catalyzes the reversible phosphorylation of UMP to UDP. This chain is Uridylate kinase, found in Synechococcus sp. (strain CC9311).